The chain runs to 563 residues: BOS complex subunit NCLN (563 aa).

The first 42 residues, Met-1–Ala-42, serve as a signal peptide directing secretion. Topologically, residues Ala-43 to Ala-522 are lumenal. N-linked (GlcNAc...) asparagine glycans are attached at residues Asn-241 and Asn-428. A helical membrane pass occupies residues Ile-523–Val-543. Residues Gln-544 to Gln-563 lie on the Cytoplasmic side of the membrane.

This sequence belongs to the nicastrin family. Component of the back of Sec61 (BOS) complex, composed of NCLN/Nicalin, NOMO1 and TMEM147. The BOS complex is part of the multi-pass translocon (MPT) complex, composed of three subcomplexes, the GEL complex (composed of RAB5IF/OPTI and TMCO1), the BOS complex (composed of NCLN/Nicalin, NOMO1 and TMEM147) and the PAT complex (composed of WDR83OS/Asterix and CCDC47). The MPT complex associates with the SEC61 complex.

Its subcellular location is the endoplasmic reticulum membrane. Its function is as follows. Component of the multi-pass translocon (MPT) complex that mediates insertion of multi-pass membrane proteins into the lipid bilayer of membranes. The MPT complex takes over after the SEC61 complex: following membrane insertion of the first few transmembrane segments of proteins by the SEC61 complex, the MPT complex occludes the lateral gate of the SEC61 complex to promote insertion of subsequent transmembrane regions. May antagonize Nodal signaling and subsequent organization of axial structures during mesodermal patterning, via its interaction with NOMO. The chain is BOS complex subunit NCLN (Ncln) from Rattus norvegicus (Rat).